The sequence spans 752 residues: Pre-mRNA-processing factor 39 (752 aa).

The segment at M1 to L148 is disordered. Positions T28–L42 are enriched in polar residues. Low complexity-rich tracts occupy residues T43–P56, Q76–S94, and E133–L148. 3 HAT repeats span residues N180–K212, G214–E246, and E254–E289. Positions N347–P374 are disordered. Positions D352–G361 are enriched in acidic residues. 2 HAT repeats span residues A408–E440 and G442–S474. Positions S678–D699 are enriched in basic and acidic residues. The disordered stretch occupies residues S678–A703. An HAT 6 repeat occupies Q700 to Q731.

The protein belongs to the PRP39 family.

It is found in the nucleus. In terms of biological role, involved in pre-mRNA splicing. The chain is Pre-mRNA-processing factor 39 (prpf39) from Danio rerio (Zebrafish).